The chain runs to 215 residues: UPF0502 protein YceH (215 aa).

Lysine 80 is subject to N6-acetyllysine.

This sequence belongs to the UPF0502 family.

The polypeptide is UPF0502 protein YceH (Escherichia coli O127:H6 (strain E2348/69 / EPEC)).